The chain runs to 355 residues: uncharacterized protein (355 aa).

This sequence belongs to the 3-beta-HSD family.

This is an uncharacterized protein from Frog virus 3 (isolate Goorha) (FV-3).